A 759-amino-acid polypeptide reads, in one-letter code: 5-methyltetrahydropteroyltriglutamate--homocysteine methyltransferase (759 aa).

Over residues 1-16 (MTQPVRRQPFTATITG) the composition is skewed to polar residues. Residues 1–22 (MTQPVRRQPFTATITGSPRIGP) are disordered. Residues 24–27 (RELK) and lysine 118 each bind 5-methyltetrahydropteroyltri-L-glutamate. L-homocysteine-binding positions include 437–439 (IGS) and glutamate 490. Residues 437-439 (IGS) and glutamate 490 contribute to the L-methionine site. 5-methyltetrahydropteroyltri-L-glutamate contacts are provided by residues 521–522 (RC) and tryptophan 567. Aspartate 605 provides a ligand contact to L-homocysteine. Residue aspartate 605 coordinates L-methionine. Residue glutamate 611 coordinates 5-methyltetrahydropteroyltri-L-glutamate. Residues histidine 647, cysteine 649, and glutamate 671 each contribute to the Zn(2+) site. Histidine 700 serves as the catalytic Proton donor. Cysteine 732 provides a ligand contact to Zn(2+).

It belongs to the vitamin-B12 independent methionine synthase family. The cofactor is Zn(2+).

It carries out the reaction 5-methyltetrahydropteroyltri-L-glutamate + L-homocysteine = tetrahydropteroyltri-L-glutamate + L-methionine. Its pathway is amino-acid biosynthesis; L-methionine biosynthesis via de novo pathway; L-methionine from L-homocysteine (MetE route): step 1/1. Catalyzes the transfer of a methyl group from 5-methyltetrahydrofolate to homocysteine resulting in methionine formation. This is 5-methyltetrahydropteroyltriglutamate--homocysteine methyltransferase from Mycobacterium tuberculosis (strain ATCC 25177 / H37Ra).